The sequence spans 114 residues: MIKALFNKNTALAAVAILALSGGAMAESAKTHKTDMAKKKVSELTCEDFNGLEESFKPTVVGWVVGFNKKGKEEDAVIDVDGIETVTPAIIEACKQEPKASFWKKAEAELKKVF.

Residues 1–26 form the signal peptide; sequence MIKALFNKNTALAAVAILALSGGAMA. Cysteine 46 and cysteine 94 are disulfide-bonded.

It belongs to the HdeA family.

The protein resides in the periplasm. Required for optimal acid stress protection. Exhibits a chaperone-like activity only at low pH by suppressing non-specifically the aggregation of denaturated periplasmic proteins. Contributes to acid resistance. Not required for wild-type virulence in the BALB/c mouse model. The sequence is that of Probable acid stress chaperone HdeA from Brucella abortus (strain 2308).